The chain runs to 143 residues: Transthyretin-like protein 33 (143 aa).

An N-terminal signal peptide occupies residues 1–20 (MSRLACISSLFILCAIGSEA).

It belongs to the nematode transthyretin-like family. Expressed in head cells next to and anterior of the first pharyngeal bulb, the pharynx, and the hypodermis.

It is found in the secreted. Functionally, protects dopaminergic neurons from degeneration caused by oxidative stress. In Caenorhabditis elegans, this protein is Transthyretin-like protein 33.